The following is a 517-amino-acid chain: NADH-quinone oxidoreductase subunit N (517 aa).

14 helical membrane passes run 14–34 (LAPT…EAFV), 40–60 (HMVQ…MVVV), 77–97 (GPAL…LLLI), 131–151 (ATEV…FVAA), 154–174 (LLTM…LCAL), 189–209 (YFLL…LVYG), 238–258 (VLLF…AAAA), 272–292 (PTPI…GALL), 306–326 (FTPI…VLAV), 334–354 (LLAY…LAPS), 362–382 (MFYL…VTLV), 404–424 (FYAG…LTSG), 451–471 (SMVL…SEPG), and 481–501 (GWLT…LGVV).

The protein belongs to the complex I subunit 2 family. As to quaternary structure, NDH-1 is composed of 14 different subunits. Subunits NuoA, H, J, K, L, M, N constitute the membrane sector of the complex.

The protein localises to the cell membrane. The catalysed reaction is a quinone + NADH + 5 H(+)(in) = a quinol + NAD(+) + 4 H(+)(out). Its function is as follows. NDH-1 shuttles electrons from NADH, via FMN and iron-sulfur (Fe-S) centers, to quinones in the respiratory chain. The immediate electron acceptor for the enzyme in this species is believed to be a menaquinone. Couples the redox reaction to proton translocation (for every two electrons transferred, four hydrogen ions are translocated across the cytoplasmic membrane), and thus conserves the redox energy in a proton gradient. The polypeptide is NADH-quinone oxidoreductase subunit N (Salinispora arenicola (strain CNS-205)).